The chain runs to 298 residues: Homoserine kinase (298 aa).

83-93 is a binding site for ATP; sequence PVSRGLGSSST.

The protein belongs to the GHMP kinase family. Homoserine kinase subfamily.

It localises to the cytoplasm. It carries out the reaction L-homoserine + ATP = O-phospho-L-homoserine + ADP + H(+). The protein operates within amino-acid biosynthesis; L-threonine biosynthesis; L-threonine from L-aspartate: step 4/5. Catalyzes the ATP-dependent phosphorylation of L-homoserine to L-homoserine phosphate. In Clostridium beijerinckii (strain ATCC 51743 / NCIMB 8052) (Clostridium acetobutylicum), this protein is Homoserine kinase.